A 370-amino-acid polypeptide reads, in one-letter code: uncharacterized protein (370 aa).

This sequence belongs to the metallo-dependent hydrolases superfamily.

This is an uncharacterized protein from Mycobacterium bovis (strain ATCC BAA-935 / AF2122/97).